The chain runs to 126 residues: Protein ApaG (126 aa).

The region spanning 2–126 is the ApaG domain; the sequence is RRKPYELKVE…FSLAIPRRLH (125 aa).

In Methylococcus capsulatus (strain ATCC 33009 / NCIMB 11132 / Bath), this protein is Protein ApaG.